Consider the following 555-residue polypeptide: Cytochrome P450 78A11 (555 aa).

Residues 12 to 32 traverse the membrane as a helical segment; that stretch reads VDATWWAYALPALLGADTLCA. Cys-495 contacts heme.

The protein belongs to the cytochrome P450 family. The cofactor is heme. In terms of tissue distribution, expressed in seedlings, shoot apices and young panicles, but not in mature leaves, calli and roots.

Its subcellular location is the membrane. Involved in the regular timing (plastochron) of lateral organs formation. May regulate the rate of leaf initiation and the duration of vegetative phase. Seems to be redundant to the function of PLASTOCHRON2, but to act in an independent pathway. In Oryza sativa subsp. japonica (Rice), this protein is Cytochrome P450 78A11 (CYP78A11).